The chain runs to 217 residues: Neuron-specific vesicular protein calcyon (217 aa).

A disordered region spans residues 1–25 (MVKLGCSFSGKPGKDPGDQDGAAMD). At 1–87 (MVKLGCSFSG…EEGRRLPTAR (87 aa)) the chain is on the extracellular side. N-linked (GlcNAc...) asparagine glycosylation occurs at asparagine 73. The helical transmembrane segment at 88-108 (MIAFAMALLGCVLIMYKAIWY) threads the bilayer. Over 109–217 (DQFTCPDGFL…AGSAAPPPAQ (109 aa)) the chain is Cytoplasmic. Residues 162 to 217 (PAAWGDGYRAAKEERKGPTQAGAAAAATEPPGKPSAKAEKEAARKAAGSAAPPPAQ) form a disordered region.

It belongs to the NSG family. As to quaternary structure, interacts with CLTA. Glycosylated. In terms of tissue distribution, expressed in the pyramidal cells of the prefrontal cortex, in hypothalamus and in caudate nucleus. No expression in spleen. Up-regulated in the prefrontal cortex of schizophrenic patients with nearly twice the levels of non-schizophrenics.

The protein resides in the cytoplasmic vesicle membrane. Its subcellular location is the cell membrane. Functionally, interacts with clathrin light chain A and stimulates clathrin self-assembly and clathrin-mediated endocytosis. In Homo sapiens (Human), this protein is Neuron-specific vesicular protein calcyon (CALY).